The primary structure comprises 216 residues: Large ribosomal subunit protein bL21 (216 aa).

Belongs to the bacterial ribosomal protein bL21 family. In terms of assembly, part of the 50S ribosomal subunit. Contacts protein L20.

In terms of biological role, this protein binds to 23S rRNA in the presence of protein L20. This is Large ribosomal subunit protein bL21 from Roseobacter denitrificans (strain ATCC 33942 / OCh 114) (Erythrobacter sp. (strain OCh 114)).